Reading from the N-terminus, the 200-residue chain is Putative NAD(P)H nitroreductase Spy0809 (200 aa).

The cofactor is FMN.

In Streptococcus pyogenes serotype M6 (strain ATCC BAA-946 / MGAS10394), this protein is Putative NAD(P)H nitroreductase Spy0809.